A 252-amino-acid chain; its full sequence is Trans-aconitate 2-methyltransferase (252 aa).

This sequence belongs to the methyltransferase superfamily. Tam family.

The protein resides in the cytoplasm. The enzyme catalyses trans-aconitate + S-adenosyl-L-methionine = (E)-3-(methoxycarbonyl)pent-2-enedioate + S-adenosyl-L-homocysteine. Functionally, catalyzes the S-adenosylmethionine monomethyl esterification of trans-aconitate. The chain is Trans-aconitate 2-methyltransferase from Escherichia coli O139:H28 (strain E24377A / ETEC).